A 194-amino-acid chain; its full sequence is MNTEDVLNEFRGAGALREGHFVLSSGLHSPVFLQKNLVFQYPDRTERLCKALAAKITEAVGPVDLCVSPAVGGIIPGYETARHLGCPSVYVEREGGEFKLRRAFSIPEGARIAMVEDIVTTGLSSRECVEAIRKAGGNVVVAACIVDRSGGRADPGAPLVALARLDVPAYPADQLPPELAAIPIEDPGSRRLKG.

A 5-phospho-alpha-D-ribose 1-diphosphate-binding site is contributed by 116–124 (EDIVTTGLS). 2 residues coordinate orotate: T120 and R148.

The protein belongs to the purine/pyrimidine phosphoribosyltransferase family. PyrE subfamily. As to quaternary structure, homodimer. The cofactor is Mg(2+).

It carries out the reaction orotidine 5'-phosphate + diphosphate = orotate + 5-phospho-alpha-D-ribose 1-diphosphate. It participates in pyrimidine metabolism; UMP biosynthesis via de novo pathway; UMP from orotate: step 1/2. Its function is as follows. Catalyzes the transfer of a ribosyl phosphate group from 5-phosphoribose 1-diphosphate to orotate, leading to the formation of orotidine monophosphate (OMP). The polypeptide is Orotate phosphoribosyltransferase (Phenylobacterium zucineum (strain HLK1)).